A 92-amino-acid polypeptide reads, in one-letter code: MPRSLKKGPFIDLHLLKKVEKAVESADKKPIKTWSRRSMIIPDMIGLTIAVHNGRQHVPVYVSDEMVGHKLGEFAPTRTYRGHAADKKAKKK.

It belongs to the universal ribosomal protein uS19 family.

Functionally, protein S19 forms a complex with S13 that binds strongly to the 16S ribosomal RNA. The chain is Small ribosomal subunit protein uS19 from Tolumonas auensis (strain DSM 9187 / NBRC 110442 / TA 4).